Reading from the N-terminus, the 486-residue chain is NADH dehydrogenase [ubiquinone] flavoprotein 1, mitochondrial (486 aa).

Residues 1–30 (MAPVRGILGLQRAVSIWKESNRLTPALRSF) constitute a mitochondrion transit peptide. Over residues 31 to 40 (STQAASTSTT) the composition is skewed to low complexity. Residues 31-57 (STQAASTSTTPQPPPPPPPPEKTHFGG) form a disordered region. Positions 41–50 (PQPPPPPPPP) are enriched in pro residues. 110 to 119 (GRGGAGFPSG) is an NADH binding site. 222-270 (FGAGAYICGEETALLESLEGKQGKPRLKPPFPANAGLYGCPTTVTNVET) provides a ligand contact to FMN. [4Fe-4S] cluster contacts are provided by cysteine 402, cysteine 405, cysteine 408, and cysteine 448.

It belongs to the complex I 51 kDa subunit family. Complex I is composed of at least 49 different subunits. This is a component of the flavoprotein-sulfur (FP) fragment of the enzyme. FMN is required as a cofactor. [4Fe-4S] cluster serves as cofactor.

Its subcellular location is the mitochondrion inner membrane. It catalyses the reaction a ubiquinone + NADH + 5 H(+)(in) = a ubiquinol + NAD(+) + 4 H(+)(out). Its function is as follows. Core subunit of the mitochondrial membrane respiratory chain NADH dehydrogenase (Complex I) that is believed to belong to the minimal assembly required for catalysis. Complex I functions in the transfer of electrons from NADH to the respiratory chain. The immediate electron acceptor for the enzyme is believed to be ubiquinone. This is NADH dehydrogenase [ubiquinone] flavoprotein 1, mitochondrial from Arabidopsis thaliana (Mouse-ear cress).